We begin with the raw amino-acid sequence, 79 residues long: Large ribosomal subunit protein uL24 (79 aa).

Belongs to the universal ribosomal protein uL24 family. In terms of assembly, part of the 50S ribosomal subunit.

In terms of biological role, one of two assembly initiator proteins, it binds directly to the 5'-end of the 23S rRNA, where it nucleates assembly of the 50S subunit. Its function is as follows. One of the proteins that surrounds the polypeptide exit tunnel on the outside of the subunit. This Lactobacillus johnsonii (strain CNCM I-12250 / La1 / NCC 533) protein is Large ribosomal subunit protein uL24.